We begin with the raw amino-acid sequence, 82 residues long: Small ribosomal subunit protein bS16 (82 aa).

It belongs to the bacterial ribosomal protein bS16 family.

This is Small ribosomal subunit protein bS16 from Vibrio vulnificus (strain CMCP6).